The sequence spans 803 residues: Zinc finger and BTB domain-containing protein 17 (803 aa).

Residues 1-104 (MDFPQHSQHV…VATFLQMQDI (104 aa)) form the BTB domain. Residues 116 to 295 (EPATSPGGNA…GLRSGTYGDR (180 aa)) are disordered. At serine 120 the chain carries Phosphoserine. Residues 132–142 (GGDKRAKEEKV) show a composition bias toward basic and acidic residues. Low complexity-rich tracts occupy residues 171-180 (GQAQSAASGA) and 206-217 (AAAEAEAALSES). 2 stretches are compositionally biased toward acidic residues: residues 233–244 (EQKEQEEQEEEG) and 261–272 (EAPEENENEESA). The interval 269–308 (EESAGTDSGQELGSEARGLRSGTYGDRTESKAYGSVIHKC) is interaction with MYC. C2H2-type zinc fingers lie at residues 306–328 (HKCEDCGKEFTHTGNFKRHIRIH), 334–356 (FSCRECSKAFSDPAACKAHEKTH), 362–384 (YGCEECGKSYRLISLLNLHKKRH), 390–412 (YRCEDCGKLFTTSGNLKRHQLVH), 418–440 (YQCDYCGRSFSDPTSKMRHLETH), 446–468 (HKCPHCDKKFNQVGNLKAHLKIH), 474–496 (LKCRECGKQFTTSGNLKRHLRIH), 502–524 (YVCIHCQRQFADPGALQRHVRIH), 530–552 (CQCVMCGKAFTQASSLIAHVRQH), 558–580 (YVCERCGKRFVQSSQLANHIRHH), 586–608 (HKCSVCSKAFVNVGDLSKHIIIH), 614–637 (YLCDKCGRGFNRVDNLRSHVKTVH), and 717–739 (YACDSCGDKFLDANSLAQHVRIH). Lysine 397 is covalently cross-linked (Glycyl lysine isopeptide (Lys-Gly) (interchain with G-Cter in ubiquitin)). Lysine 481 is covalently cross-linked (Glycyl lysine isopeptide (Lys-Gly) (interchain with G-Cter in ubiquitin)). Residues 637-718 (HQGKAGIKIL…EDPNTHILYA (82 aa)) form an interaction with MYC region. Positions 637–803 (HQGKAGIKIL…TAPECPPPAE (167 aa)) are interaction with HCFC1. Residues 779–803 (RDGAEGQPALAETSPTAPECPPPAE) form a disordered region.

Belongs to the krueppel C2H2-type zinc-finger protein family. In terms of assembly, homooligomerizes (via the BTB/POZ domain), multimerization is required for DNA binding. Interacts (via the C-terminal zinc fingers) with GIF1; the interaction results in the recruitment of MYB to the CDKN1A/p21 and CDKN1B promoters and repression of transcription. Interacts with TRAF2, interfering with the binding of UBC13 to TRAF2, and inhibiting TRAF2 E3 ligase activity. Interacts with MYC (via the C-terminal helix-loop-helix motif); the interaction inhibits ZBTB17 transactivation and growth arrest activities and renders it insoluble in the nucleus. Also interacts with HCFC1, MAGEA4 and TMPRSS11A. Interacts with BCL6; the interaction inhibits ZBTB17 transactivation activity on target genes involved in cell cycle arrest. Interacts with ZBTB49 isoform 3/ZNF509S1; this interaction blocks ZBTB17-mediated repression of RB1. Post-translationally, undergoes 'Lys-48'-linked polyubiquitination at Lys-397 and Lys-481 and subsequent proteasomal degradation in a TRAF2-dependent manner. As to expression, expressed in germinal center B-cells.

It localises to the nucleus. Its function is as follows. Transcription factor that can function as an activator or repressor depending on its binding partners, and by targeting negative regulators of cell cycle progression. Plays a critical role in early lymphocyte development, where it is essential to prevent apoptosis in lymphoid precursors, allowing them to survive in response to IL7 and undergo proper lineage commitment. Has been shown to bind to the promoters of adenovirus major late protein and cyclin D1 and activate transcription. Required for early embryonic development during gastrulation. Represses RB1 transcription; this repression can be blocked by interaction with ZBTB49 isoform 3/ZNF509S1. The protein is Zinc finger and BTB domain-containing protein 17 (ZBTB17) of Homo sapiens (Human).